A 73-amino-acid chain; its full sequence is Stigmurin (73 aa).

A signal peptide spans 1–22 (MQIKHLITLFFLVLIVADQCSA). At lysine 39 the chain carries Lysine amide. Positions 45–73 (EISAQIEQYKDLQKREAELEKLLDRLPMY) are excised as a propeptide.

This sequence belongs to the non-disulfide-bridged peptide (NDBP) superfamily. Short antimicrobial peptide (group 4) family. As to expression, expressed by the venom gland.

Its subcellular location is the secreted. Functionally, antimicrobial peptide with activity against Gram-positive bacterial strains (S.aureus (MIC=2-140 uM), methicillin-resistant S.aureus (MRSA) (MIC=8-17 uM), S.epidermidis (MIC=1.17 uM), and the yeasts C.albicans, C.krusei, and C.glabrata (MIC=34-69 uM)). Acts by disrupting the cell membrane (observed on outer layer of the S.aureus). Is not active against Gram-negative bacteria (E.coli, E.Cloacae, P.aeruginosa), and the Gram-positive bacterium E.faecalis. Also shows toxicity against several cell lines, but possess low hemolytic activity at the highest concentration tested. Also shows antiparasitic activity against Trypanosoma cruzi by decreasing the viability of the epimastigote and trypomastigote forms of the parasite. Displays high hydroxyl radical scavenging activity (antioxidant action). In a wound infection model, the topical application of this peptide demonstrates antibacterial effects, as well as an ability to accelerate wound closure speed, which suggests the induction of tissue repair. In the model of polymicrobial sepsis, it exhibits an antibiotic effect, reducing the levels of microorganisms in the infectious focus and the inflammatory responses in the lung and cecum of septic animals. The polypeptide is Stigmurin (Tityus stigmurus (Brazilian scorpion)).